A 361-amino-acid polypeptide reads, in one-letter code: DNA replication and repair protein RecF (361 aa).

Position 30–37 (30–37 (GPNGSGKT)) interacts with ATP.

This sequence belongs to the RecF family.

Its subcellular location is the cytoplasm. Functionally, the RecF protein is involved in DNA metabolism; it is required for DNA replication and normal SOS inducibility. RecF binds preferentially to single-stranded, linear DNA. It also seems to bind ATP. The chain is DNA replication and repair protein RecF from Yersinia pestis.